We begin with the raw amino-acid sequence, 225 residues long: Probable methylthioribulose-1-phosphate dehydratase (225 aa).

A substrate-binding site is contributed by Cys86. His104 and His106 together coordinate Zn(2+). Catalysis depends on Glu127, which acts as the Proton donor/acceptor. His183 lines the Zn(2+) pocket.

It belongs to the aldolase class II family. MtnB subfamily. It depends on Zn(2+) as a cofactor.

The protein localises to the cytoplasm. It carries out the reaction 5-(methylsulfanyl)-D-ribulose 1-phosphate = 5-methylsulfanyl-2,3-dioxopentyl phosphate + H2O. Its pathway is amino-acid biosynthesis; L-methionine biosynthesis via salvage pathway; L-methionine from S-methyl-5-thio-alpha-D-ribose 1-phosphate: step 2/6. Its function is as follows. Catalyzes the dehydration of methylthioribulose-1-phosphate (MTRu-1-P) into 2,3-diketo-5-methylthiopentyl-1-phosphate (DK-MTP-1-P). This chain is Probable methylthioribulose-1-phosphate dehydratase, found in Leishmania braziliensis.